The primary structure comprises 869 residues: Dynamin-3 (869 aa).

Positions 28-294 (LLELPQIAVV…LTNHIRDTLP (267 aa)) constitute a Dynamin-type G domain. The segment at 38 to 45 (GGQSAGKS) is G1 motif. 38 to 46 (GGQSAGKSS) contributes to the GTP binding site. The tract at residues 64–66 (VTR) is G2 motif. The G3 motif stretch occupies residues 136-139 (DLPG). The G4 motif stretch occupies residues 205 to 208 (TKLD). 205–211 (TKLDLMD) contacts GTP. Y231 is subject to Phosphotyrosine. The segment at 235–238 (VNRS) is G5 motif. 236–239 (NRSQ) provides a ligand contact to GTP. K299 is modified (N6-acetyllysine). Residues 525–631 (IVIRKGWLTV…WKASLLRAGV (107 aa)) enclose the PH domain. Phosphotyrosine is present on Y603. N6-acetyllysine is present on K604. In terms of domain architecture, GED spans 659-750 (VETIRNLVDS…IIGDINTVTV (92 aa)). Residues 752–869 (TPAPPPVDDS…IRPLESSLLD (118 aa)) are disordered. Phosphoserine occurs at positions 769 and 773. Positions 775–796 (TTQRRLTLSAPLPRPASSRGPA) are enriched in low complexity. 2 stretches are compositionally biased toward pro residues: residues 797–822 (PAIPSPGPHSGAPPVPFRPGPLPPFP) and 832–855 (PQVPSRPTRAPPSVPSRRPPPSPT). S853 bears the Phosphoserine mark.

It belongs to the TRAFAC class dynamin-like GTPase superfamily. Dynamin/Fzo/YdjA family. Isoform-specific expression in germ-cell-depleted testis (Sertoli cells), brain (peripheral sensory neurons), lung and heart.

Its subcellular location is the cytoplasm. It is found in the cytoskeleton. It localises to the cytoplasmic vesicle. The protein resides in the golgi apparatus. It catalyses the reaction GTP + H2O = GDP + phosphate + H(+). Functionally, microtubule-associated force-producing protein involved in producing microtubule bundles and able to bind and hydrolyze GTP. Most probably involved in vesicular trafficking processes, in particular endocytosis. The sequence is that of Dynamin-3 (Dnm3) from Rattus norvegicus (Rat).